We begin with the raw amino-acid sequence, 435 residues long: Nuclear hormone receptor family member nhr-28 (435 aa).

Residues 5 to 80 (KKPCSVCGEA…VGMRKSAVQR (76 aa)) constitute a DNA-binding region (nuclear receptor). NR C4-type zinc fingers lie at residues 8–28 (CSVCGEAGDGAHFGAEACRAC) and 44–63 (CRAMGACIIQKNVRCMCRAC). Positions 84–106 (LFGRQDSSDGSNPRVSPSTSWPM) are disordered. A compositionally biased stretch (polar residues) spans 91–104 (SDGSNPRVSPSTSW). In terms of domain architecture, NR LBD spans 113–374 (IEEPGMATLN…ETFYELVSGR (262 aa)).

This sequence belongs to the nuclear hormone receptor family.

The protein resides in the nucleus. Orphan nuclear receptor. The polypeptide is Nuclear hormone receptor family member nhr-28 (Caenorhabditis briggsae).